A 379-amino-acid chain; its full sequence is Homoserine O-acetyltransferase (379 aa).

An AB hydrolase-1 domain is found at 54–332 (NAILVCHALS…PYQSEEIVKS (279 aa)). Ser159 serves as the catalytic Nucleophile. Arg228 is a binding site for substrate. Residues Asp318 and His352 contribute to the active site. Substrate is bound at residue Asp353.

It belongs to the AB hydrolase superfamily. MetX family. As to quaternary structure, homodimer.

The protein resides in the cytoplasm. It carries out the reaction L-homoserine + acetyl-CoA = O-acetyl-L-homoserine + CoA. It functions in the pathway amino-acid biosynthesis; L-methionine biosynthesis via de novo pathway; O-acetyl-L-homoserine from L-homoserine: step 1/1. Its function is as follows. Transfers an acetyl group from acetyl-CoA to L-homoserine, forming acetyl-L-homoserine. This is Homoserine O-acetyltransferase from Leptospira meyeri.